The following is an 844-amino-acid chain: DNA mismatch repair protein MutS (844 aa).

Residue 602–609 (GPNMSGKS) coordinates ATP.

Belongs to the DNA mismatch repair MutS family.

In terms of biological role, this protein is involved in the repair of mismatches in DNA. It is possible that it carries out the mismatch recognition step. This protein has a weak ATPase activity. The polypeptide is DNA mismatch repair protein MutS (Streptococcus pneumoniae (strain ATCC 700669 / Spain 23F-1)).